The following is a 972-amino-acid chain: UvrABC system protein A (972 aa).

32 to 39 (GLSGSGKS) is a binding site for ATP. The C4-type; atypical zinc finger occupies 257–285 (CPNGHALAVDDLEPRSFSFNSPYGACPEC). 2 ABC transporter domains span residues 315–601 (WSNG…KDSI) and 621–950 (VDPR…KFLA). Residue 654–661 (GVSGSGKS) coordinates ATP. A C4-type zinc finger spans residues 753–779 (CEACTGDGTIKIEMNFLPDVYVPCEVC).

This sequence belongs to the ABC transporter superfamily. UvrA family. In terms of assembly, forms a heterotetramer with UvrB during the search for lesions.

The protein localises to the cytoplasm. Functionally, the UvrABC repair system catalyzes the recognition and processing of DNA lesions. UvrA is an ATPase and a DNA-binding protein. A damage recognition complex composed of 2 UvrA and 2 UvrB subunits scans DNA for abnormalities. When the presence of a lesion has been verified by UvrB, the UvrA molecules dissociate. The sequence is that of UvrABC system protein A from Mycobacterium bovis (strain ATCC BAA-935 / AF2122/97).